A 167-amino-acid chain; its full sequence is Probable chemoreceptor glutamine deamidase CheD (167 aa).

It belongs to the CheD family.

It carries out the reaction L-glutaminyl-[protein] + H2O = L-glutamyl-[protein] + NH4(+). Its function is as follows. Probably deamidates glutamine residues to glutamate on methyl-accepting chemotaxis receptors (MCPs), playing an important role in chemotaxis. The protein is Probable chemoreceptor glutamine deamidase CheD of Natronomonas pharaonis (strain ATCC 35678 / DSM 2160 / CIP 103997 / JCM 8858 / NBRC 14720 / NCIMB 2260 / Gabara) (Halobacterium pharaonis).